Here is a 179-residue protein sequence, read N- to C-terminus: Cytochrome b6-f complex iron-sulfur subunit (179 aa).

Residues 21–43 (LLTFGTVTGVALGALYPVVNYFI) traverse the membrane as a helical segment. The region spanning 61–162 (GNDVSVTKFL…TNVSDDKIVL (102 aa)) is the Rieske domain. Residues cysteine 108, histidine 110, cysteine 126, and histidine 129 each contribute to the [2Fe-2S] cluster site. Cysteine 113 and cysteine 128 are disulfide-bonded.

Belongs to the Rieske iron-sulfur protein family. As to quaternary structure, the 4 large subunits of the cytochrome b6-f complex are cytochrome b6, subunit IV (17 kDa polypeptide, PetD), cytochrome f and the Rieske protein, while the 4 small subunits are PetG, PetL, PetM and PetN. The complex functions as a dimer. [2Fe-2S] cluster serves as cofactor.

Its subcellular location is the cellular thylakoid membrane. The catalysed reaction is 2 oxidized [plastocyanin] + a plastoquinol + 2 H(+)(in) = 2 reduced [plastocyanin] + a plastoquinone + 4 H(+)(out). Functionally, component of the cytochrome b6-f complex, which mediates electron transfer between photosystem II (PSII) and photosystem I (PSI), cyclic electron flow around PSI, and state transitions. The polypeptide is Cytochrome b6-f complex iron-sulfur subunit (Nostoc punctiforme (strain ATCC 29133 / PCC 73102)).